The sequence spans 343 residues: Phosphoribosylformylglycinamidine cyclo-ligase (343 aa).

The protein belongs to the AIR synthase family.

It localises to the cytoplasm. It carries out the reaction 2-formamido-N(1)-(5-O-phospho-beta-D-ribosyl)acetamidine + ATP = 5-amino-1-(5-phospho-beta-D-ribosyl)imidazole + ADP + phosphate + H(+). It functions in the pathway purine metabolism; IMP biosynthesis via de novo pathway; 5-amino-1-(5-phospho-D-ribosyl)imidazole from N(2)-formyl-N(1)-(5-phospho-D-ribosyl)glycinamide: step 2/2. This chain is Phosphoribosylformylglycinamidine cyclo-ligase, found in Carboxydothermus hydrogenoformans (strain ATCC BAA-161 / DSM 6008 / Z-2901).